A 935-amino-acid chain; its full sequence is Isoleucine--tRNA ligase (935 aa).

The short motif at 58 to 68 (PYANGSIHVGH) is the 'HIGH' region element. E558 is an L-isoleucyl-5'-AMP binding site. The short motif at 599–603 (KMSKS) is the 'KMSKS' region element. K602 is an ATP binding site. 4 residues coordinate Zn(2+): C897, C900, C917, and C920.

This sequence belongs to the class-I aminoacyl-tRNA synthetase family. IleS type 1 subfamily. As to quaternary structure, monomer. The cofactor is Zn(2+).

It is found in the cytoplasm. The catalysed reaction is tRNA(Ile) + L-isoleucine + ATP = L-isoleucyl-tRNA(Ile) + AMP + diphosphate. Functionally, catalyzes the attachment of isoleucine to tRNA(Ile). As IleRS can inadvertently accommodate and process structurally similar amino acids such as valine, to avoid such errors it has two additional distinct tRNA(Ile)-dependent editing activities. One activity is designated as 'pretransfer' editing and involves the hydrolysis of activated Val-AMP. The other activity is designated 'posttransfer' editing and involves deacylation of mischarged Val-tRNA(Ile). This Francisella philomiragia subsp. philomiragia (strain ATCC 25017 / CCUG 19701 / FSC 153 / O#319-036) protein is Isoleucine--tRNA ligase.